Reading from the N-terminus, the 296-residue chain is Phosphatidylserine decarboxylase proenzyme (296 aa).

Catalysis depends on charge relay system; for autoendoproteolytic cleavage activity residues Asp-92, His-149, and Ser-251. Ser-251 (schiff-base intermediate with substrate; via pyruvic acid; for decarboxylase activity) is an active-site residue. Ser-251 carries the post-translational modification Pyruvic acid (Ser); by autocatalysis.

This sequence belongs to the phosphatidylserine decarboxylase family. PSD-B subfamily. Prokaryotic type I sub-subfamily. Heterodimer of a large membrane-associated beta subunit and a small pyruvoyl-containing alpha subunit. It depends on pyruvate as a cofactor. In terms of processing, is synthesized initially as an inactive proenzyme. Formation of the active enzyme involves a self-maturation process in which the active site pyruvoyl group is generated from an internal serine residue via an autocatalytic post-translational modification. Two non-identical subunits are generated from the proenzyme in this reaction, and the pyruvate is formed at the N-terminus of the alpha chain, which is derived from the carboxyl end of the proenzyme. The autoendoproteolytic cleavage occurs by a canonical serine protease mechanism, in which the side chain hydroxyl group of the serine supplies its oxygen atom to form the C-terminus of the beta chain, while the remainder of the serine residue undergoes an oxidative deamination to produce ammonia and the pyruvoyl prosthetic group on the alpha chain. During this reaction, the Ser that is part of the protease active site of the proenzyme becomes the pyruvoyl prosthetic group, which constitutes an essential element of the active site of the mature decarboxylase.

It localises to the cell membrane. The catalysed reaction is a 1,2-diacyl-sn-glycero-3-phospho-L-serine + H(+) = a 1,2-diacyl-sn-glycero-3-phosphoethanolamine + CO2. The protein operates within phospholipid metabolism; phosphatidylethanolamine biosynthesis; phosphatidylethanolamine from CDP-diacylglycerol: step 2/2. In terms of biological role, catalyzes the formation of phosphatidylethanolamine (PtdEtn) from phosphatidylserine (PtdSer). This is Phosphatidylserine decarboxylase proenzyme from Hahella chejuensis (strain KCTC 2396).